A 329-amino-acid chain; its full sequence is Aspartate--ammonia ligase (329 aa).

Belongs to the class-II aminoacyl-tRNA synthetase family. AsnA subfamily.

It localises to the cytoplasm. It catalyses the reaction L-aspartate + NH4(+) + ATP = L-asparagine + AMP + diphosphate + H(+). It participates in amino-acid biosynthesis; L-asparagine biosynthesis; L-asparagine from L-aspartate (ammonia route): step 1/1. This chain is Aspartate--ammonia ligase, found in Ureaplasma parvum serovar 3 (strain ATCC 27815 / 27 / NCTC 11736).